Here is a 58-residue protein sequence, read N- to C-terminus: Preprotein translocase subunit SecG (58 aa).

At 1-32 (MAQKKKSSGSGLMSSAGLMTYYDADKKAIHVQ) the chain is on the cytoplasmic side. Residues 33-54 (PKTVFIFGAICGIVILAFSAGF) traverse the membrane as a helical segment. Residues 55 to 58 (GLWP) lie on the Extracellular side of the membrane.

It belongs to the SEC61-beta family. In terms of assembly, component of the protein translocase complex. Heterotrimer consisting of alpha (SecY), beta (SecG) and gamma (SecE) subunits. Can form oligomers of the heterotrimer.

It is found in the cell membrane. In terms of biological role, involved in protein export. The function of the beta subunit is unknown, but it may be involved in stabilization of the trimeric complex. In Methanococcoides burtonii (strain DSM 6242 / NBRC 107633 / OCM 468 / ACE-M), this protein is Preprotein translocase subunit SecG.